Reading from the N-terminus, the 461-residue chain is Steroidogenic factor 1 (461 aa).

The nuclear receptor DNA-binding region spans 10–85; the sequence is DELCPVCGDK…VGMRLEAVRA (76 aa). Residues 13 to 33 form an NR C4-type zinc finger; sequence CPVCGDKVSGYHYGLLTCESC. Residues Lys34, Lys38, and Lys72 each carry the N6-acetyllysine modification. An NR C4-type zinc finger spans residues 49-73; sequence CTESQSCKIDKTQRKRCPFCRFQKC. A Glycyl lysine isopeptide (Lys-Gly) (interchain with G-Cter in SUMO) cross-link involves residue Lys119. The interval 119-157 is disordered; that stretch reads KLETGPPMGVPPPPPPAPDYVLPPSLHGPEPKGLAAGPP. Positions 126–136 are enriched in pro residues; sequence MGVPPPPPPAP. Lys194 is covalently cross-linked (Glycyl lysine isopeptide (Lys-Gly) (interchain with G-Cter in SUMO)). Ser203 carries the phosphoserine; by CDK7 modification. An NR LBD domain is found at 222–459; that stretch reads NVPELILQLL…NLLIEMLQAK (238 aa). Residues 230–461 are important for dimerization; sequence LLQLEPDEDQ…LIEMLQAKQT (232 aa). Residues Gly341, Tyr436, and Lys440 each contribute to the a 1,2-diacyl-sn-glycero-3-phosphocholine site. Gly341, Tyr436, and Lys440 together coordinate a 1,2-diacylglycero-3-phosphoethanolamine.

This sequence belongs to the nuclear hormone receptor family. NR5 subfamily. Binds DNA as a monomer. Interacts with NR0B2 and PPARGC1A. Part of a complex consisting of SFPQ, NONO and NR5A1. Interacts with NCOA2. Interacts with DGKQ and CDK7. Binds to and activated by HIPK3. Acetylation stimulates the transcriptional activity. Post-translationally, sumoylation reduces CDK7-mediated phosphorylation on Ser-203. In terms of processing, phosphorylated on Ser-203 by CDK7. This phosphorylation promotes transcriptional activity. High expressed in the adrenal cortex, the ovary, the testis, and the spleen.

It is found in the nucleus. Functionally, transcriptional activator. Essential for sexual differentiation and formation of the primary steroidogenic tissues. Binds to the Ad4 site found in the promoter region of steroidogenic P450 genes such as CYP11A, CYP11B and CYP21B. Also regulates the AMH/Muellerian inhibiting substance gene as well as the AHCH and STAR genes. 5'-YCAAGGYC-3' and 5'-RRAGGTCA-3' are the consensus sequences for the recognition by NR5A1. The SFPQ-NONO-NR5A1 complex binds to the CYP17 promoter and regulates basal and cAMP-dependent transcriptional activity. Binds phosphatidylcholine. Binds phospholipids with a phosphatidylinositol (PI) headgroup, in particular PI(3,4)P2 and PI(3,4,5)P3. Activated by the phosphorylation of NR5A1 by HIPK3 leading to increased steroidogenic gene expression upon cAMP signaling pathway stimulation. In Homo sapiens (Human), this protein is Steroidogenic factor 1 (NR5A1).